The sequence spans 530 residues: Phosphoenolpyruvate carboxykinase (ATP) (530 aa).

Residues arginine 60, tyrosine 195, and lysine 201 each contribute to the substrate site. Residues lysine 201, histidine 221, and 237–245 (GLSGTGKTT) each bind ATP. Lysine 201 and histidine 221 together coordinate Mn(2+). Mn(2+) is bound at residue aspartate 258. ATP-binding positions include glutamate 286, arginine 324, 443–444 (RI), and serine 449. Position 324 (arginine 324) interacts with substrate.

The protein belongs to the phosphoenolpyruvate carboxykinase (ATP) family. It depends on Mn(2+) as a cofactor.

The protein resides in the cytoplasm. The catalysed reaction is oxaloacetate + ATP = phosphoenolpyruvate + ADP + CO2. Its pathway is carbohydrate biosynthesis; gluconeogenesis. In terms of biological role, involved in the gluconeogenesis. Catalyzes the conversion of oxaloacetate (OAA) to phosphoenolpyruvate (PEP) through direct phosphoryl transfer between the nucleoside triphosphate and OAA. The polypeptide is Phosphoenolpyruvate carboxykinase (ATP) (Pelobacter propionicus (strain DSM 2379 / NBRC 103807 / OttBd1)).